Reading from the N-terminus, the 276-residue chain is Glutamate 5-kinase (276 aa).

Lysine 14 lines the ATP pocket. Residues serine 54, aspartate 141, and asparagine 157 each coordinate substrate. ATP contacts are provided by residues 177 to 178 (SD) and 219 to 225 (TGGMLTK).

The protein belongs to the glutamate 5-kinase family.

The protein resides in the cytoplasm. It catalyses the reaction L-glutamate + ATP = L-glutamyl 5-phosphate + ADP. It functions in the pathway amino-acid biosynthesis; L-proline biosynthesis; L-glutamate 5-semialdehyde from L-glutamate: step 1/2. Its function is as follows. Catalyzes the transfer of a phosphate group to glutamate to form L-glutamate 5-phosphate. The protein is Glutamate 5-kinase of Listeria monocytogenes serovar 1/2a (strain ATCC BAA-679 / EGD-e).